Reading from the N-terminus, the 188-residue chain is Oleosin S2-2 (188 aa).

Ala-2 is modified (N-acetylalanine). The segment at 2–51 (ATVERRVQVDPTDKRIHLQPQYEGDVGYGYGYGGRADYKSSGPSSNQIVA) is polar. Transmembrane regions (helical) follow at residues 49–69 (IVAL…AGLT), 74–94 (VIGL…IVPA), and 96–116 (ITIG…LTGL). Residues 52 to 125 (LIVGVPVGGS…LSSVSWVLNY (74 aa)) form a hydrophobic region. The tract at residues 164–188 (DKAHEAHDTSLTTETTEPGKTRRHT) is disordered. Polar residues predominate over residues 172 to 181 (TSLTTETTEP).

This sequence belongs to the oleosin family.

It localises to the lipid droplet. It is found in the membrane. Functionally, may have a structural role to stabilize the lipid body during desiccation of the seed by preventing coalescence of the oil. Probably interacts with both lipid and phospholipid moieties of lipid bodies. May also provide recognition signals for specific lipase anchorage in lipolysis during seedling growth. The polypeptide is Oleosin S2-2 (S2) (Brassica napus (Rape)).